Here is a 438-residue protein sequence, read N- to C-terminus: Anaerobic glycerol-3-phosphate dehydrogenase subunit B (438 aa).

Belongs to the anaerobic G-3-P dehydrogenase subunit B family. Composed of a catalytic GlpA/B dimer and of membrane bound GlpC. FMN serves as cofactor.

The catalysed reaction is a quinone + sn-glycerol 3-phosphate = dihydroxyacetone phosphate + a quinol. Its pathway is polyol metabolism; glycerol degradation via glycerol kinase pathway; glycerone phosphate from sn-glycerol 3-phosphate (anaerobic route): step 1/1. In terms of biological role, conversion of glycerol 3-phosphate to dihydroxyacetone. Uses fumarate or nitrate as electron acceptor. The protein is Anaerobic glycerol-3-phosphate dehydrogenase subunit B of Vibrio vulnificus (strain CMCP6).